A 337-amino-acid chain; its full sequence is Ketol-acid reductoisomerase (NADP(+)) (337 aa).

One can recognise a KARI N-terminal Rossmann domain in the interval 1–183; sequence MAIETLYDSD…GGARAGVIPT (183 aa). Residues 26–29, R49, S52, S54, and 84–87 contribute to the NADP(+) site; these read YGSQ and DTSQ. The active site involves H109. Position 135 (G135) interacts with NADP(+). Residues 184-329 enclose the KARI C-terminal knotted domain; it reads TFKDETETDL…SQLRDLMSWV (146 aa). Mg(2+)-binding residues include D192, E196, E228, and E232. S253 lines the substrate pocket.

Belongs to the ketol-acid reductoisomerase family. Mg(2+) serves as cofactor.

The enzyme catalyses (2R)-2,3-dihydroxy-3-methylbutanoate + NADP(+) = (2S)-2-acetolactate + NADPH + H(+). The catalysed reaction is (2R,3R)-2,3-dihydroxy-3-methylpentanoate + NADP(+) = (S)-2-ethyl-2-hydroxy-3-oxobutanoate + NADPH + H(+). Its pathway is amino-acid biosynthesis; L-isoleucine biosynthesis; L-isoleucine from 2-oxobutanoate: step 2/4. The protein operates within amino-acid biosynthesis; L-valine biosynthesis; L-valine from pyruvate: step 2/4. In terms of biological role, involved in the biosynthesis of branched-chain amino acids (BCAA). Catalyzes an alkyl-migration followed by a ketol-acid reduction of (S)-2-acetolactate (S2AL) to yield (R)-2,3-dihydroxy-isovalerate. In the isomerase reaction, S2AL is rearranged via a Mg-dependent methyl migration to produce 3-hydroxy-3-methyl-2-ketobutyrate (HMKB). In the reductase reaction, this 2-ketoacid undergoes a metal-dependent reduction by NADPH to yield (R)-2,3-dihydroxy-isovalerate. In Corynebacterium aurimucosum (strain ATCC 700975 / DSM 44827 / CIP 107346 / CN-1) (Corynebacterium nigricans), this protein is Ketol-acid reductoisomerase (NADP(+)).